The primary structure comprises 329 residues: Olfactory receptor 52L1 (329 aa).

At 1-43 the chain is on the extracellular side; the sequence is MTLVSFFSFLSKPLIMLLSNSSWRLSQPSFLLVGIPGLEESQH. Asparagine 20 carries an N-linked (GlcNAc...) asparagine glycan. The chain crosses the membrane as a helical span at residues 44–64; it reads WIALPLGILYLLALVGNVTIL. Over 65–72 the chain is Cytoplasmic; that stretch reads FIIWMDPS. Residues 73–93 traverse the membrane as a helical segment; sequence LHQSMYLFLSMLAAIDLVLAS. At 94–117 the chain is on the extracellular side; it reads STAPKALAVLLVHAHEIGYIVCLI. Residues cysteine 115 and cysteine 207 are joined by a disulfide bond. Residues 118–138 form a helical membrane-spanning segment; that stretch reads QMFFIHAFSSMESGVLVAMAL. The Cytoplasmic portion of the chain corresponds to 139–157; that stretch reads DRYVAICHPLHHSTILHPG. Residues 158–178 traverse the membrane as a helical segment; the sequence is VIGRIGMVVLVRGLLLLIPFP. Residues 179-214 lie on the Extracellular side of the membrane; it reads ILLGTLIFCQATIIGHAYCEHMAVVKLACSETTVNR. The chain crosses the membrane as a helical span at residues 215–235; that stretch reads AYGLTMALLVIGLDVLAIGVS. At 236 to 255 the chain is on the cytoplasmic side; that stretch reads YAHILQAVLKVPGSEARLKA. Residues 256 to 276 form a helical membrane-spanning segment; sequence FSTCGSHICVILVFYVPGIFS. Topologically, residues 277–291 are extracellular; that stretch reads FLTHRFGHHVPHHVH. A helical transmembrane segment spans residues 292–312; the sequence is VLLATRYLLMPPALNPLVYGV. Topologically, residues 313 to 329 are cytoplasmic; sequence KTQQIRQRVLRVFTQKD.

This sequence belongs to the G-protein coupled receptor 1 family.

The protein localises to the cell membrane. Functionally, odorant receptor. This is Olfactory receptor 52L1 (OR52L1) from Homo sapiens (Human).